The chain runs to 435 residues: GTPase Obg (435 aa).

Residues 6-164 (ADFVDRVKIF…RWLELELKIL (159 aa)) form the Obg domain. Residues 165–335 (ADVGLVGYPN…LVSKLASIVR (171 aa)) form the OBG-type G domain. GTP contacts are provided by residues 171 to 178 (GYPNVGKS), 196 to 200 (FTTLI), 217 to 220 (DIPG), 287 to 290 (NKID), and 316 to 318 (SAV). S178 and T198 together coordinate Mg(2+). An OCT domain is found at 357–435 (RRLPEKFHLE…IGDFEFEYRE (79 aa)).

Belongs to the TRAFAC class OBG-HflX-like GTPase superfamily. OBG GTPase family. In terms of assembly, monomer. It depends on Mg(2+) as a cofactor.

It localises to the cytoplasm. An essential GTPase which binds GTP, GDP and possibly (p)ppGpp with moderate affinity, with high nucleotide exchange rates and a fairly low GTP hydrolysis rate. Plays a role in control of the cell cycle, stress response, ribosome biogenesis and in those bacteria that undergo differentiation, in morphogenesis control. The polypeptide is GTPase Obg (Thermotoga petrophila (strain ATCC BAA-488 / DSM 13995 / JCM 10881 / RKU-1)).